The following is a 191-amino-acid chain: MRTGRMSRKTKETDIQLELNLDGTGIADVNTGIGFFDHMLTSFARHAEFDLKVRAEGDLYVDEHHLVEDTGIVLGKVLAEALGDMAGTARFGEARIPMDEALADVALDIGGRSYLVLKAEFASPQVGQFSTQLVKHFFETLASNAKITIHASVYGDNDHHKIEALFKAFAYAMKRAVKIEGKEVKSTKGTL.

This sequence belongs to the imidazoleglycerol-phosphate dehydratase family.

The protein localises to the cytoplasm. The enzyme catalyses D-erythro-1-(imidazol-4-yl)glycerol 3-phosphate = 3-(imidazol-4-yl)-2-oxopropyl phosphate + H2O. It functions in the pathway amino-acid biosynthesis; L-histidine biosynthesis; L-histidine from 5-phospho-alpha-D-ribose 1-diphosphate: step 6/9. The sequence is that of Imidazoleglycerol-phosphate dehydratase from Methanosarcina barkeri (strain Fusaro / DSM 804).